The sequence spans 159 residues: Nucleotide-binding protein Pmen_0939 (159 aa).

It belongs to the YajQ family.

Its function is as follows. Nucleotide-binding protein. The chain is Nucleotide-binding protein Pmen_0939 from Ectopseudomonas mendocina (strain ymp) (Pseudomonas mendocina).